The chain runs to 307 residues: Mitochondrial 2-oxodicarboxylate carrier 2 (307 aa).

The next 6 membrane-spanning stretches (helical) occupy residues 10 to 30, 76 to 95, 122 to 142, 171 to 191, 215 to 235, and 280 to 300; these read LPFI…LTVM, SRLY…KRAT, IAAG…FELI, GLYK…GGYF, LIAG…FDVV, and CRLA…MNFF. 3 Solcar repeats span residues 10–106, 116–200, and 209–299; these read LPFI…YQKI, TTQK…VRNS, and QKTR…MMNF.

Belongs to the mitochondrial carrier (TC 2.A.29) family.

The protein resides in the mitochondrion inner membrane. Its function is as follows. Transports C5-C7 oxodicarboxylates across the inner membranes of mitochondria. Can transport 2-oxoadipate, 2-oxoglutarate, adipate, glutarate, 2-oxopimelate, oxaloacetate, citrate and malate. The main physiological role is probably to supply 2-oxoadipate and 2-oxoglutarate from the mitochondrial matrix to the cytosol where they are used in the biosynthesis of lysine and glutamate, respectively, and in lysine catabolism. This is Mitochondrial 2-oxodicarboxylate carrier 2 (ODC2) from Saccharomyces cerevisiae (strain ATCC 204508 / S288c) (Baker's yeast).